We begin with the raw amino-acid sequence, 217 residues long: Phosphatidylserine decarboxylase proenzyme (217 aa).

Ser-182 acts as the Schiff-base intermediate with substrate; via pyruvic acid in catalysis. A Pyruvic acid (Ser); by autocatalysis modification is found at Ser-182.

This sequence belongs to the phosphatidylserine decarboxylase family. PSD-A subfamily. As to quaternary structure, heterodimer of a large membrane-associated beta subunit and a small pyruvoyl-containing alpha subunit. Pyruvate is required as a cofactor. In terms of processing, is synthesized initially as an inactive proenzyme. Formation of the active enzyme involves a self-maturation process in which the active site pyruvoyl group is generated from an internal serine residue via an autocatalytic post-translational modification. Two non-identical subunits are generated from the proenzyme in this reaction, and the pyruvate is formed at the N-terminus of the alpha chain, which is derived from the carboxyl end of the proenzyme. The post-translation cleavage follows an unusual pathway, termed non-hydrolytic serinolysis, in which the side chain hydroxyl group of the serine supplies its oxygen atom to form the C-terminus of the beta chain, while the remainder of the serine residue undergoes an oxidative deamination to produce ammonia and the pyruvoyl prosthetic group on the alpha chain.

The protein localises to the cell membrane. It carries out the reaction a 1,2-diacyl-sn-glycero-3-phospho-L-serine + H(+) = a 1,2-diacyl-sn-glycero-3-phosphoethanolamine + CO2. It functions in the pathway phospholipid metabolism; phosphatidylethanolamine biosynthesis; phosphatidylethanolamine from CDP-diacylglycerol: step 2/2. Catalyzes the formation of phosphatidylethanolamine (PtdEtn) from phosphatidylserine (PtdSer). The chain is Phosphatidylserine decarboxylase proenzyme from Nitratidesulfovibrio vulgaris (strain ATCC 29579 / DSM 644 / CCUG 34227 / NCIMB 8303 / VKM B-1760 / Hildenborough) (Desulfovibrio vulgaris).